We begin with the raw amino-acid sequence, 176 residues long: Large ribosomal subunit protein bL12m (176 aa).

This sequence belongs to the bacterial ribosomal protein bL12 family. Component of the mitochondrial large ribosomal subunit (mt-LSU). Mature N.crassa 74S mitochondrial ribosomes consist of a small (37S) and a large (54S) subunit. The 37S small subunit contains a 16S ribosomal RNA (16S mt-rRNA) and 32 different proteins. The 54S large subunit contains a 23S rRNA (23S mt-rRNA) and 42 different proteins.

The protein resides in the mitochondrion. Component of the mitochondrial ribosome (mitoribosome), a dedicated translation machinery responsible for the synthesis of mitochondrial genome-encoded proteins, including at least some of the essential transmembrane subunits of the mitochondrial respiratory chain. The mitoribosomes are attached to the mitochondrial inner membrane and translation products are cotranslationally integrated into the membrane. In Neurospora crassa (strain ATCC 24698 / 74-OR23-1A / CBS 708.71 / DSM 1257 / FGSC 987), this protein is Large ribosomal subunit protein bL12m (mrpl12).